The chain runs to 513 residues: Protein disulfide-isomerase (513 aa).

A signal peptide spans 1–25 (MAISKVWISLLLALAVVLSAPAARA). Positions 26–149 (EEAAAAEEAA…IVEYLKKQVG (124 aa)) constitute a Thioredoxin 1 domain. Catalysis depends on nucleophile residues Cys67 and Cys70. A disulfide bond links Cys67 and Cys70. Asn282 carries N-linked (GlcNAc...) asparagine glycosylation. One can recognise a Thioredoxin 2 domain in the interval 369–488 (FRKSEPIPEA…IVDYIRKNKE (120 aa)). Active-site nucleophile residues include Cys411 and Cys414. Cys411 and Cys414 are joined by a disulfide. Low complexity predominate over residues 491–507 (GQAAAATEKAAEPAATE). Residues 491–513 (GQAAAATEKAAEPAATEPLKDEL) form a disordered region. Positions 510-513 (KDEL) match the Prevents secretion from ER motif.

It belongs to the protein disulfide isomerase family.

It is found in the endoplasmic reticulum lumen. It catalyses the reaction Catalyzes the rearrangement of -S-S- bonds in proteins.. Participates in the folding of proteins containing disulfide bonds, may be involved in glycosylation, prolyl hydroxylation and triglyceride transfer. This Hordeum vulgare (Barley) protein is Protein disulfide-isomerase (PDI).